Here is a 393-residue protein sequence, read N- to C-terminus: Diphosphomevalonate decarboxylase (393 aa).

(R)-5-diphosphomevalonate-binding positions include 21-24 (YWGK), Arg77, 156-161 (SGSACR), and Thr212.

Belongs to the diphosphomevalonate decarboxylase family. As to quaternary structure, homodimer.

Its subcellular location is the cytoplasm. The protein localises to the nucleus. It carries out the reaction (R)-5-diphosphomevalonate + ATP = isopentenyl diphosphate + ADP + phosphate + CO2. Its pathway is isoprenoid biosynthesis; isopentenyl diphosphate biosynthesis via mevalonate pathway; isopentenyl diphosphate from (R)-mevalonate: step 3/3. In terms of biological role, diphosphomevalonate decarboxylase; part of the second module of ergosterol biosynthesis pathway that includes the middle steps of the pathway. Mvd1 converts diphosphomevalonate into isopentenyl diphosphate. The second module is carried out in the vacuole and involves the formation of farnesyl diphosphate, which is also an important intermediate in the biosynthesis of ubiquinone, dolichol, heme and prenylated proteins. Activity by the mevalonate kinase erg12 first converts mevalonate into 5-phosphomevalonate. 5-phosphomevalonate is then further converted to 5-diphosphomevalonate by the phosphomevalonate kinase erg8. The diphosphomevalonate decarboxylase mvd1 then produces isopentenyl diphosphate. The isopentenyl-diphosphate delta-isomerase idi1 then catalyzes the 1,3-allylic rearrangement of the homoallylic substrate isopentenyl (IPP) to its highly electrophilic allylic isomer, dimethylallyl diphosphate (DMAPP). Finally the farnesyl diphosphate synthase fps1 catalyzes the sequential condensation of isopentenyl pyrophosphate with dimethylallyl pyrophosphate, and then with the resultant geranylpyrophosphate to the ultimate product farnesyl pyrophosphate. This is Diphosphomevalonate decarboxylase (mvd1) from Schizosaccharomyces pombe (strain 972 / ATCC 24843) (Fission yeast).